The sequence spans 359 residues: Phospho-N-acetylmuramoyl-pentapeptide-transferase (359 aa).

Helical transmembrane passes span 21–41 (YITF…FLLG), 73–93 (TMGG…WADL), 98–118 (IWVT…DDYL), 143–163 (GICL…VPFF), 166–186 (VAPD…VGTS), 202–222 (PLVI…NAII), 237–257 (VTVF…FNAY), 261–281 (IFMG…VAII), 286–306 (ILLT…IFQV), and 336–356 (KIIV…VSTL).

This sequence belongs to the glycosyltransferase 4 family. MraY subfamily. Mg(2+) serves as cofactor.

The protein localises to the cell inner membrane. The catalysed reaction is UDP-N-acetyl-alpha-D-muramoyl-L-alanyl-gamma-D-glutamyl-meso-2,6-diaminopimeloyl-D-alanyl-D-alanine + di-trans,octa-cis-undecaprenyl phosphate = di-trans,octa-cis-undecaprenyl diphospho-N-acetyl-alpha-D-muramoyl-L-alanyl-D-glutamyl-meso-2,6-diaminopimeloyl-D-alanyl-D-alanine + UMP. Its pathway is cell wall biogenesis; peptidoglycan biosynthesis. Functionally, catalyzes the initial step of the lipid cycle reactions in the biosynthesis of the cell wall peptidoglycan: transfers peptidoglycan precursor phospho-MurNAc-pentapeptide from UDP-MurNAc-pentapeptide onto the lipid carrier undecaprenyl phosphate, yielding undecaprenyl-pyrophosphoryl-MurNAc-pentapeptide, known as lipid I. This is Phospho-N-acetylmuramoyl-pentapeptide-transferase from Desulfosudis oleivorans (strain DSM 6200 / JCM 39069 / Hxd3) (Desulfococcus oleovorans).